A 35-amino-acid polypeptide reads, in one-letter code: Cupiennin-2e (35 aa).

E35 is modified (glutamic acid 1-amide).

Expressed by the venom gland.

The protein localises to the secreted. The chain is Cupiennin-2e from Cupiennius salei (American wandering spider).